Here is a 436-residue protein sequence, read N- to C-terminus: Phaseolin, alpha-type (436 aa).

Positions 1-24 (MMRARVPLLLLGILFLASLSASFA) are cleaved as a signal peptide. The tract at residues 233 to 257 (LSKHAKSSSRKSHSKQDNTIGNEFG) is disordered. The segment covering 236-245 (HAKSSSRKSH) has biased composition (basic residues). Residues 245–396 (HSKQDNTIGN…TFSGSGEEVM (152 aa)) form the Cupin type-1 domain. N258 carries N-linked (GlcNAc...) (complex) asparagine; alternate glycosylation. N-linked (GlcNAc...) (high mannose) asparagine; alternate glycosylation occurs at N258. N-linked (GlcNAc...) (high mannose) asparagine glycosylation occurs at N347. Residues 411–436 (HHHQQEQQKGSHQQEQQKGRKGAFVY) are disordered. Over residues 417-426 (QQKGSHQQEQ) the composition is skewed to low complexity.

It belongs to the 7S seed storage protein family. As to quaternary structure, homotrimer. Post-translationally, N-glycosylated; glycans consist in Man9(GlcNAc)2 and Man7(GlcNAc)2 when dually glycosylated at Asn-258 and Asn-347, whereas it consists in Xyl-Man3(GlcNAc)2 when solely glycosylated at Asn-258.

It localises to the vacuole. The protein resides in the aleurone grain. Functionally, major seed storage protein. In Phaseolus vulgaris (Kidney bean), this protein is Phaseolin, alpha-type.